A 336-amino-acid chain; its full sequence is Protein-arginine N-acetylglucosaminyltransferase SseK1 (336 aa).

Residue Arg24 is glycosylated (N-beta-linked (GlcNAc) arginine; by autocatalysis). Residues 50 to 52 (QWF) and Tyr74 contribute to the UDP-N-acetyl-alpha-D-glucosamine site. N-beta-linked (GlcNAc) arginine; by autocatalysis glycosylation occurs at Arg152. A DXD motif motif is present at residues 223–225 (DAD). 224-225 (AD) is a binding site for UDP-N-acetyl-alpha-D-glucosamine. A Mn(2+)-binding site is contributed by Asp225. Glu255 acts as the Proton acceptor in catalysis. 2 residues coordinate Mn(2+): Asn322 and Ser324. UDP-N-acetyl-alpha-D-glucosamine-binding residues include Ser324 and Ser329. Arg333 carries N-beta-linked (GlcNAc) arginine; by autocatalysis glycosylation.

It belongs to the glycosyltransferase NleB family. The cofactor is Mn(2+). In terms of processing, auto-glycosylated: arginine GlcNAcylation is required for activity toward death domain-containing host target proteins.

Its subcellular location is the secreted. It is found in the host cytoplasm. It localises to the host cytosol. It carries out the reaction L-arginyl-[protein] + UDP-N-acetyl-alpha-D-glucosamine = N(omega)-(N-acetyl-beta-D-glucosaminyl)-L-arginyl-[protein] + UDP + H(+). Protein-arginine N-acetylglucosaminyltransferase activity is inhibited by 100066N compound (flavone analog) and 102644N compound (a substituted isoxazole). In terms of biological role, protein-arginine N-acetylglucosaminyltransferase effector that disrupts TNF signaling in infected cells, including NF-kappa-B signaling, apoptosis and necroptosis. Acts by catalyzing the transfer of a single N-acetylglucosamine (GlcNAc) to a conserved arginine residue in the death domain of host proteins TRADD and, to a lower extent, FADD: arginine GlcNAcylation prevents homotypic/heterotypic death domain interactions and assembly of the oligomeric TNF-alpha receptor complex, thereby disrupting TNF signaling. Also acts on host proteins without a death domain: catalyzes arginine GlcNAcylation of host GAPDH protein, thereby preventing GAPDH interaction with TRAF2, leading to inhibit NF-kappa-B signaling. Catalyzes GlcNAcylation of host tubulin-folding cofactor TBCB, thereby promoting microtubule stability. Also mediates auto-GlcNAcylation, which is required for activity toward death domain-containing host target proteins. This Salmonella enteritidis (strain 2009K0958) protein is Protein-arginine N-acetylglucosaminyltransferase SseK1.